The following is a 283-amino-acid chain: Tumor necrosis factor receptor superfamily member 14 (283 aa).

The N-terminal stretch at 1 to 38 is a signal peptide; it reads MEPPGDWGPPPWRSTPKTDVLRLVLYLTFLGAPCYAPA. Over 39–202 the chain is Extracellular; it reads LPSCKEDEYP…GAGTSSSHWV (164 aa). 8 disulfide bridges follow: Cys42/Cys53, Cys54/Cys67, Cys57/Cys75, Cys78/Cys93, Cys96/Cys111, Cys99/Cys119, Cys121/Cys138, and Cys127/Cys135. TNFR-Cys repeat units follow at residues 42 to 75, 78 to 119, and 121 to 162; these read CKEDEYPVGSECCPKCSPGYRVKEACGELTGTVC, CPPG…NAVC, and CSPG…DTLC. Residue Asn110 is glycosylated (N-linked (GlcNAc...) asparagine). An N-linked (GlcNAc...) asparagine glycan is attached at Asn173. Residues 203-223 traverse the membrane as a helical segment; it reads WWFLSGSLVIVIVCSTVGLII. Topologically, residues 224–283 are cytoplasmic; it reads CVKRRKPRGDVVKVIVSVQRKRQEAEGEATVIEALQAPPDVTTVAVEETIPSFTGRSPNH. Residue Ser240 is modified to Phosphoserine.

Belongs to the tumor necrosis factor receptor superfamily. Interacts with TRAF2, TRAF3 and TRAF5. Interacts (via CRD1/TNFR-Cys 1) with CD160; this interaction is direct. Interacts with LTA and TNFSF14. Interacts (via CRD1/TNFR-Cys 1) in cis and trans with BTLA; the cis interactions inhibits the trans interactions. As to quaternary structure, (Microbial infection) Interacts with herpes simplex virus 1/HHV-1 envelope glycoprotein D. In terms of assembly, (Microbial infection) Interacts with herpes simplex virus 2/HHV-2 envelope glycoprotein D. In terms of processing, N-glycosylated. Widely expressed, with the highest expression in lung, spleen and thymus. Expressed in a subpopulation of B cells and monocytes. Expressed in naive T cells.

It is found in the cell membrane. Functionally, receptor for four distinct ligands: The TNF superfamily members TNFSF14/LIGHT and homotrimeric LTA/lymphotoxin-alpha and the immunoglobulin superfamily members BTLA and CD160, altogether defining a complex stimulatory and inhibitory signaling network. Signals via the TRAF2-TRAF3 E3 ligase pathway to promote immune cell survival and differentiation. Participates in bidirectional cell-cell contact signaling between antigen presenting cells and lymphocytes. In response to ligation of TNFSF14/LIGHT, delivers costimulatory signals to T cells, promoting cell proliferation and effector functions. Interacts with CD160 on NK cells, enhancing IFNG production and anti-tumor immune response. In the context of bacterial infection, acts as a signaling receptor on epithelial cells for CD160 from intraepithelial lymphocytes, triggering the production of antimicrobial proteins and pro-inflammatory cytokines. Upon binding to CD160 on activated CD4+ T cells, down-regulates CD28 costimulatory signaling, restricting memory and alloantigen-specific immune response. May interact in cis (on the same cell) or in trans (on other cells) with BTLA. In cis interactions, appears to play an immune regulatory role inhibiting in trans interactions in naive T cells to maintain a resting state. In trans interactions, can predominate during adaptive immune response to provide survival signals to effector T cells. In terms of biological role, (Microbial infection) Acts as a receptor for Herpes simplex virus 1/HHV-1. Its function is as follows. (Microbial infection) Acts as a receptor for Herpes simplex virus 2/HHV-2. The protein is Tumor necrosis factor receptor superfamily member 14 of Homo sapiens (Human).